Consider the following 1765-residue polypeptide: RANBP2-like and GRIP domain-containing protein 8 (1765 aa).

Thr19 carries the post-translational modification Phosphothreonine. The residue at position 21 (Ser21) is a Phosphoserine. 3 TPR repeats span residues 26-59 (SMKG…QERD), 60-93 (PKAH…NPTQ), and 648-681 (EDAH…VSYW). The disordered stretch occupies residues 760 to 804 (GPLYKNGSLRNADSEIKHSTPSPTKYSLSPSKSYKYSPETPPRWT). Residues 778 to 797 (STPSPTKYSLSPSKSYKYSP) are compositionally biased toward low complexity. The 137-residue stretch at 1036 to 1172 (HFEPVVQMPE…FEECQRLLLD (137 aa)) folds into the RanBD1 1 domain. 2 disordered regions span residues 1216–1247 (TEEE…PTLE) and 1306–1330 (AKLN…EERD). Over residues 1231–1244 (SDTTIKPNAENTGP) the composition is skewed to polar residues. Acidic residues predominate over residues 1317–1329 (TDEESVVTQEEER). The RanBD1 2 domain occupies 1333-1469 (YFEPVVPLPD…FDEAKTAQEK (137 aa)). Positions 1580–1593 (NNSETSSVAQSGSE) are enriched in polar residues. Disordered regions lie at residues 1580-1621 (NNSE…KNLS) and 1746-1765 (KGKL…RSSG). A compositionally biased stretch (basic and acidic residues) spans 1594 to 1617 (SKVEPKKCELSKNSDIEQSSDSKV). The GRIP domain occupies 1702 to 1752 (REKSAANLEYLKNVLLQFIFLKPGSERERLLPVINTMLQLSPEEKGKLAAV).

As to quaternary structure, interacts with GTP-bound ARL1.

This chain is RANBP2-like and GRIP domain-containing protein 8 (RGPD8), found in Homo sapiens (Human).